Here is a 506-residue protein sequence, read N- to C-terminus: Lysine--tRNA ligase (506 aa).

Mg(2+) is bound by residues glutamate 416 and glutamate 423.

It belongs to the class-II aminoacyl-tRNA synthetase family. In terms of assembly, homodimer. Mg(2+) serves as cofactor.

It is found in the cytoplasm. It carries out the reaction tRNA(Lys) + L-lysine + ATP = L-lysyl-tRNA(Lys) + AMP + diphosphate. The chain is Lysine--tRNA ligase from Sodalis glossinidius (strain morsitans).